The following is a 236-amino-acid chain: Geranylgeranylglyceryl phosphate synthase (236 aa).

Lys13 contributes to the sn-glycerol 1-phosphate binding site. Mg(2+) contacts are provided by Asp15 and Thr42. Sn-glycerol 1-phosphate-binding positions include 161–166 (YVEYSG), Gly191, and 211–212 (GD).

This sequence belongs to the GGGP/HepGP synthase family. Group I subfamily. The cofactor is Mg(2+).

The protein localises to the cytoplasm. The catalysed reaction is sn-glycerol 1-phosphate + (2E,6E,10E)-geranylgeranyl diphosphate = sn-3-O-(geranylgeranyl)glycerol 1-phosphate + diphosphate. Its pathway is membrane lipid metabolism; glycerophospholipid metabolism. Prenyltransferase that catalyzes the transfer of the geranylgeranyl moiety of geranylgeranyl diphosphate (GGPP) to the C3 hydroxyl of sn-glycerol-1-phosphate (G1P). This reaction is the first ether-bond-formation step in the biosynthesis of archaeal membrane lipids. The chain is Geranylgeranylglyceryl phosphate synthase from Halobacterium salinarum (strain ATCC 700922 / JCM 11081 / NRC-1) (Halobacterium halobium).